The chain runs to 362 residues: Chorismate synthase (362 aa).

R47 contacts NADP(+). Residues 124-126, G286, 301-305, and R327 each bind FMN; these read RAS and KPTAT.

Belongs to the chorismate synthase family. In terms of assembly, homotetramer. Requires FMNH2 as cofactor.

The enzyme catalyses 5-O-(1-carboxyvinyl)-3-phosphoshikimate = chorismate + phosphate. It participates in metabolic intermediate biosynthesis; chorismate biosynthesis; chorismate from D-erythrose 4-phosphate and phosphoenolpyruvate: step 7/7. Its function is as follows. Catalyzes the anti-1,4-elimination of the C-3 phosphate and the C-6 proR hydrogen from 5-enolpyruvylshikimate-3-phosphate (EPSP) to yield chorismate, which is the branch point compound that serves as the starting substrate for the three terminal pathways of aromatic amino acid biosynthesis. This reaction introduces a second double bond into the aromatic ring system. The sequence is that of Chorismate synthase from Prochlorococcus marinus (strain SARG / CCMP1375 / SS120).